A 236-amino-acid polypeptide reads, in one-letter code: THO complex subunit 7B (236 aa).

A coiled-coil region spans residues 99 to 228 (EANLREKESF…IRSASEDQRN (130 aa)).

This sequence belongs to the THOC7 family. In terms of assembly, component of the THO complex, which is composed of THO1, THO2, THO3, THO5, THO6 and THO7.

It is found in the nucleus. Functionally, acts as a component of the THO subcomplex of the TREX complex which is thought to couple mRNA transcription, processing and nuclear export. The polypeptide is THO complex subunit 7B (THO7B) (Arabidopsis thaliana (Mouse-ear cress)).